Here is a 682-residue protein sequence, read N- to C-terminus: Glutamine--fructose-6-phosphate aminotransferase [isomerizing] 2 (682 aa).

Catalysis depends on cysteine 2, which acts as the For GATase activity. Positions 2 to 288 (CGIFAYMNYR…DDDIAAVADG (287 aa)) constitute a Glutamine amidotransferase type-2 domain. Serine 244 carries the phosphoserine modification. SIS domains lie at 360 to 499 (HLKE…DRIS) and 531 to 672 (LALE…VDFP). Substrate contacts are provided by residues 377–378 (TS), 422–424 (SQS), threonine 427, and histidine 578.

The enzyme catalyses D-fructose 6-phosphate + L-glutamine = D-glucosamine 6-phosphate + L-glutamate. Its pathway is nucleotide-sugar biosynthesis; UDP-N-acetyl-alpha-D-glucosamine biosynthesis; alpha-D-glucosamine 6-phosphate from D-fructose 6-phosphate: step 1/1. Controls the flux of glucose into the hexosamine pathway. Most likely involved in regulating the availability of precursors for N- and O-linked glycosylation of proteins. In Bos taurus (Bovine), this protein is Glutamine--fructose-6-phosphate aminotransferase [isomerizing] 2 (GFPT2).